The primary structure comprises 440 residues: APO protein 2, chloroplastic (440 aa).

The transit peptide at 1 to 62 directs the protein to the chloroplast; sequence MSITYSAISF…SLQLNSRVVL (62 aa). The segment covering 106 to 115 has biased composition (basic and acidic residues); sequence ARERVKNNKD. The segment at 106–126 is disordered; the sequence is ARERVKNNKDKPKRPLPPPKN. 2 APO domains span residues 162 to 247 and 332 to 417; these read ACGW…EIPE and VCGY…VVPE.

This sequence belongs to the APO family.

It is found in the plastid. Its subcellular location is the chloroplast. Functionally, may be involved in the stable assembly of several 4Fe-4S cluster-containing complexes of chloroplasts. This Arabidopsis thaliana (Mouse-ear cress) protein is APO protein 2, chloroplastic (APO2).